Consider the following 583-residue polypeptide: Aspartate--tRNA ligase (583 aa).

An L-aspartate-binding site is contributed by Glu-174. The interval 198–201 is aspartate; that stretch reads QITK. Arg-220 provides a ligand contact to L-aspartate. ATP-binding positions include 220–222 and Gln-229; that span reads RDE. His-443 is an L-aspartate binding site. ATP is bound at residue Glu-477. Arg-484 is an L-aspartate binding site. 529 to 532 contacts ATP; the sequence is GLDR.

It belongs to the class-II aminoacyl-tRNA synthetase family. Type 1 subfamily. As to quaternary structure, homodimer.

Its subcellular location is the cytoplasm. The catalysed reaction is tRNA(Asp) + L-aspartate + ATP = L-aspartyl-tRNA(Asp) + AMP + diphosphate. Catalyzes the attachment of L-aspartate to tRNA(Asp) in a two-step reaction: L-aspartate is first activated by ATP to form Asp-AMP and then transferred to the acceptor end of tRNA(Asp). The polypeptide is Aspartate--tRNA ligase (Streptococcus agalactiae serotype V (strain ATCC BAA-611 / 2603 V/R)).